Consider the following 173-residue polypeptide: Probable capsid assembly scaffolding protein (173 aa).

Residues methionine 1–threonine 30 form a disordered region. Residues valine 36–alanine 56 adopt a coiled-coil conformation.

This sequence belongs to the L5likevirus scaffolding protein family.

Functionally, scaffolding protein involved in the icosahedric procapsid assembly. Coassembles with the capsid proteins to form the procapsid, in which the scaffolding protein is found within the external shell of icosahedrally arranged capsid protein subunits. This chain is Probable capsid assembly scaffolding protein (16), found in Mycobacterium (Mycobacteriophage D29).